Reading from the N-terminus, the 345-residue chain is Tetraacyldisaccharide 4'-kinase (345 aa).

51-58 (HVGGAGKT) contributes to the ATP binding site.

This sequence belongs to the LpxK family.

The catalysed reaction is a lipid A disaccharide + ATP = a lipid IVA + ADP + H(+). It participates in glycolipid biosynthesis; lipid IV(A) biosynthesis; lipid IV(A) from (3R)-3-hydroxytetradecanoyl-[acyl-carrier-protein] and UDP-N-acetyl-alpha-D-glucosamine: step 6/6. Transfers the gamma-phosphate of ATP to the 4'-position of a tetraacyldisaccharide 1-phosphate intermediate (termed DS-1-P) to form tetraacyldisaccharide 1,4'-bis-phosphate (lipid IVA). This chain is Tetraacyldisaccharide 4'-kinase, found in Bradyrhizobium sp. (strain BTAi1 / ATCC BAA-1182).